A 284-amino-acid polypeptide reads, in one-letter code: Serine/arginine-rich splicing factor RS2Z32 (284 aa).

Residues threonine 11–glycine 81 enclose the RRM domain. The interval isoleucine 74–glycine 97 is disordered. 2 CCHC-type zinc fingers span residues glycine 99–alanine 116 and asparagine 121–asparagine 138. The tract at residues isoleucine 132–proline 284 is disordered. Residues arginine 159–serine 180 show a composition bias toward basic residues. 3 positions are modified to phosphoserine: serine 166, serine 168, and serine 184. A compositionally biased stretch (basic and acidic residues) spans valine 186–glutamate 203. Phosphoserine is present on residues serine 205, serine 207, serine 214, serine 216, serine 225, serine 235, serine 255, serine 265, serine 277, and serine 281. The segment covering lysine 209–proline 236 has biased composition (basic and acidic residues).

Belongs to the splicing factor SR family. RS2Z subfamily. Component of the spliceosome. Post-translationally, extensively phosphorylated on serine residues in the RS domain.

Its subcellular location is the nucleus. Functionally, probably involved in intron recognition and spliceosome assembly. The protein is Serine/arginine-rich splicing factor RS2Z32 (RS2Z32) of Arabidopsis thaliana (Mouse-ear cress).